Consider the following 416-residue polypeptide: Serine hydroxymethyltransferase (416 aa).

Residues L121 and 125 to 127 contribute to the (6S)-5,6,7,8-tetrahydrofolate site; that span reads GHL. At K229 the chain carries N6-(pyridoxal phosphate)lysine. A (6S)-5,6,7,8-tetrahydrofolate-binding site is contributed by 354–356; the sequence is SPF.

This sequence belongs to the SHMT family. As to quaternary structure, homodimer. It depends on pyridoxal 5'-phosphate as a cofactor.

It localises to the cytoplasm. It carries out the reaction (6R)-5,10-methylene-5,6,7,8-tetrahydrofolate + glycine + H2O = (6S)-5,6,7,8-tetrahydrofolate + L-serine. Its pathway is one-carbon metabolism; tetrahydrofolate interconversion. The protein operates within amino-acid biosynthesis; glycine biosynthesis; glycine from L-serine: step 1/1. Catalyzes the reversible interconversion of serine and glycine with tetrahydrofolate (THF) serving as the one-carbon carrier. This reaction serves as the major source of one-carbon groups required for the biosynthesis of purines, thymidylate, methionine, and other important biomolecules. Also exhibits THF-independent aldolase activity toward beta-hydroxyamino acids, producing glycine and aldehydes, via a retro-aldol mechanism. In Halorhodospira halophila (strain DSM 244 / SL1) (Ectothiorhodospira halophila (strain DSM 244 / SL1)), this protein is Serine hydroxymethyltransferase.